An 82-amino-acid chain; its full sequence is Sulfur carrier protein TusA (82 aa).

Cysteine 19 acts as the Cysteine persulfide intermediate in catalysis.

The protein belongs to the sulfur carrier protein TusA family.

The protein resides in the cytoplasm. Functionally, sulfur carrier protein which probably makes part of a sulfur-relay system. In Tolumonas auensis (strain DSM 9187 / NBRC 110442 / TA 4), this protein is Sulfur carrier protein TusA.